Reading from the N-terminus, the 316-residue chain is Ribonuclease Z (316 aa).

Zn(2+)-binding residues include histidine 59, histidine 61, aspartate 63, histidine 64, histidine 135, aspartate 203, and histidine 261. The active-site Proton acceptor is the aspartate 63.

This sequence belongs to the RNase Z family. Homodimer. Zn(2+) is required as a cofactor.

The enzyme catalyses Endonucleolytic cleavage of RNA, removing extra 3' nucleotides from tRNA precursor, generating 3' termini of tRNAs. A 3'-hydroxy group is left at the tRNA terminus and a 5'-phosphoryl group is left at the trailer molecule.. Functionally, zinc phosphodiesterase, which displays some tRNA 3'-processing endonuclease activity. Probably involved in tRNA maturation, by removing a 3'-trailer from precursor tRNA. The chain is Ribonuclease Z from Nanoarchaeum equitans (strain Kin4-M).